Consider the following 267-residue polypeptide: uncharacterized protein (267 aa).

One can recognise an ABC transporter domain in the interval 17–248 (LKVENLTKIF…PRDRTSIEFL (232 aa)). An ATP-binding site is contributed by 53–60 (GPSGCGKT).

Belongs to the ABC transporter superfamily.

This is an uncharacterized protein from Methanocaldococcus jannaschii (strain ATCC 43067 / DSM 2661 / JAL-1 / JCM 10045 / NBRC 100440) (Methanococcus jannaschii).